A 381-amino-acid polypeptide reads, in one-letter code: Putative heat shock protein HSP 90-beta 2 (381 aa).

3 residues coordinate ATP: asparagine 46, aspartate 88, and lysine 107. Over residues 145–174 (KEISDGKAEEEKGEKEEENKDDEEKPKIED) the composition is skewed to basic and acidic residues. The segment at 145 to 192 (KEISDGKAEEEKGEKEEENKDDEEKPKIEDVGSDEEDDSGKDKKKKTK) is disordered. Serine 177 carries the post-translational modification Phosphoserine. Residues 315–347 (ELPEDGEEKKRMEERKAKFENLCKFMKETLDKK) adopt a coiled-coil conformation.

Belongs to the heat shock protein 90 family. As to quaternary structure, homodimer.

It is found in the cytoplasm. Putative molecular chaperone that may promote the maturation, structural maintenance and proper regulation of specific target proteins. The protein is Putative heat shock protein HSP 90-beta 2 (HSP90AB2P) of Homo sapiens (Human).